The sequence spans 95 residues: Aspartyl/glutamyl-tRNA(Asn/Gln) amidotransferase subunit C (95 aa).

This sequence belongs to the GatC family. Heterotrimer of A, B and C subunits.

It catalyses the reaction L-glutamyl-tRNA(Gln) + L-glutamine + ATP + H2O = L-glutaminyl-tRNA(Gln) + L-glutamate + ADP + phosphate + H(+). It carries out the reaction L-aspartyl-tRNA(Asn) + L-glutamine + ATP + H2O = L-asparaginyl-tRNA(Asn) + L-glutamate + ADP + phosphate + 2 H(+). Allows the formation of correctly charged Asn-tRNA(Asn) or Gln-tRNA(Gln) through the transamidation of misacylated Asp-tRNA(Asn) or Glu-tRNA(Gln) in organisms which lack either or both of asparaginyl-tRNA or glutaminyl-tRNA synthetases. The reaction takes place in the presence of glutamine and ATP through an activated phospho-Asp-tRNA(Asn) or phospho-Glu-tRNA(Gln). This Clostridium botulinum (strain 657 / Type Ba4) protein is Aspartyl/glutamyl-tRNA(Asn/Gln) amidotransferase subunit C.